The primary structure comprises 292 residues: Alpha-soluble NSF attachment protein (292 aa).

An N-acetylserine modification is found at serine 2. Residue lysine 261 forms a Glycyl lysine isopeptide (Lys-Gly) (interchain with G-Cter in ubiquitin) linkage.

This sequence belongs to the SNAP family. Binds to vacuolar cis-SNARE complexes composed of the v-SNAREs NYV1, VTI1 and YKT6, and the t-SNAREs VAM3 and VAM7. Interacts with SEC18.

Its subcellular location is the membrane. Its function is as follows. SNARE complex protein that binds to cis-SNARE complexes on membranes and is required for vesicular transport between the endoplasmic reticulum and the Golgi apparatus and for homotypic vacuole fusion. During the priming step of membrane fusion, is released from cis-SNARE complexes by SEC18 to establish a pool of unpaired SNAREs, which are required for interactions in trans during docking and fusion steps. Can displace HOPS from SNARE complexes, which may be a prerequisite for trans-SNARE complex disassembly and subsequent rounds of priming, docking and fusion. The protein is Alpha-soluble NSF attachment protein (SEC17) of Saccharomyces cerevisiae (strain ATCC 204508 / S288c) (Baker's yeast).